A 305-amino-acid chain; its full sequence is Tyrosine recombinase XerC (305 aa).

Residues 4-95 form the Core-binding (CB) domain; it reads TSIQALINKW…AVKNFYRFLE (92 aa). Positions 116 to 298 constitute a Tyr recombinase domain; the sequence is LLPKALSEDD…SIKHLEAVYT (183 aa). Catalysis depends on residues Arg-159, Lys-182, His-250, Arg-253, and His-276. Catalysis depends on Tyr-285, which acts as the O-(3'-phospho-DNA)-tyrosine intermediate.

The protein belongs to the 'phage' integrase family. XerC subfamily. In terms of assembly, forms a cyclic heterotetrameric complex composed of two molecules of XerC and two molecules of XerD.

The protein localises to the cytoplasm. Its function is as follows. Site-specific tyrosine recombinase, which acts by catalyzing the cutting and rejoining of the recombining DNA molecules. The XerC-XerD complex is essential to convert dimers of the bacterial chromosome into monomers to permit their segregation at cell division. It also contributes to the segregational stability of plasmids. This chain is Tyrosine recombinase XerC, found in Rickettsia africae (strain ESF-5).